We begin with the raw amino-acid sequence, 448 residues long: Asparagine--tRNA ligase (448 aa).

Belongs to the class-II aminoacyl-tRNA synthetase family. Homodimer.

The protein localises to the cytoplasm. It catalyses the reaction tRNA(Asn) + L-asparagine + ATP = L-asparaginyl-tRNA(Asn) + AMP + diphosphate + H(+). The sequence is that of Asparagine--tRNA ligase from Streptococcus suis (strain 98HAH33).